We begin with the raw amino-acid sequence, 404 residues long: Type II restriction enzyme EcoRII (404 aa).

Y308 is an active-site residue.

Homodimer. The cofactor is Mg(2+).

It catalyses the reaction Endonucleolytic cleavage of DNA to give specific double-stranded fragments with terminal 5'-phosphates.. An E and P subtype restriction enzyme that recognizes the double-stranded sequence 5'-CCWGG-3' and cleaves before C-1. This Escherichia coli protein is Type II restriction enzyme EcoRII (ecoRIIR).